Here is a 1349-residue protein sequence, read N- to C-terminus: Zinc finger protein 804B (1349 aa).

The C2H2-type zinc finger occupies 55 to 79 (FYCELCDKQYHKHQEFDNHINSYDH). The disordered stretch occupies residues 985–1010 (YASESRNDQDSAIPRTTEKDKSKSSH).

In Homo sapiens (Human), this protein is Zinc finger protein 804B (ZNF804B).